Here is a 219-residue protein sequence, read N- to C-terminus: Large ribosomal subunit protein uL1 (219 aa).

Belongs to the universal ribosomal protein uL1 family. In terms of assembly, part of the 50S ribosomal subunit.

Binds directly to 23S rRNA. Probably involved in E site tRNA release. In terms of biological role, protein L1 is also a translational repressor protein, it controls the translation of its operon by binding to its mRNA. This chain is Large ribosomal subunit protein uL1, found in Pyrococcus abyssi (strain GE5 / Orsay).